A 206-amino-acid polypeptide reads, in one-letter code: Large ribosomal subunit protein mL62 (206 aa).

The N-terminal 29 residues, 1–29, are a transit peptide targeting the mitochondrion; that stretch reads MATAWCLPWTLRRAGAWLLTPPLRCPRRA.

Belongs to the prokaryotic/mitochondrial release factor family. Mitochondrion-specific ribosomal protein mL62 subfamily. In terms of assembly, component of the mitochondrial 39S ribosomal subunit.

The protein localises to the mitochondrion. The enzyme catalyses an N-acyl-L-alpha-aminoacyl-tRNA + H2O = an N-acyl-L-amino acid + a tRNA + H(+). Functionally, essential peptidyl-tRNA hydrolase component of the mitochondrial large ribosomal subunit. Acts as a codon-independent translation release factor that has lost all stop codon specificity and directs the termination of translation in mitochondrion, possibly in case of abortive elongation. May be involved in the hydrolysis of peptidyl-tRNAs that have been prematurely terminated and thus in the recycling of stalled mitochondrial ribosomes. This chain is Large ribosomal subunit protein mL62, found in Ailuropoda melanoleuca (Giant panda).